A 580-amino-acid chain; its full sequence is Small conductance calcium-activated potassium channel protein 2 (580 aa).

2 disordered regions span residues 1–68 and 88–116; these read MSSC…VSKP and GGGGGGGGGGGGSGHGSSSGTKSSKKKNQ. Positions 48-61 are enriched in low complexity; the sequence is SSPSAAAAASSSAP. A compositionally biased stretch (gly residues) spans 88-104; sequence GGGGGGGGGGGGSGHGS. The helical transmembrane segment at 140 to 160 threads the bilayer; that stretch reads LIFGMFGIVVMVIETELSWGA. At Tyr-161 the chain carries Phosphotyrosine. A helical transmembrane segment spans residues 169 to 189; it reads LALKCLISLSTIILLGLIIVY. Residues 215–235 form a helical membrane-spanning segment; it reads IFFICLEILVCAIHPIPGNYT. The chain crosses the membrane as a helical span at residues 257–277; the sequence is IILSIPMFLRLYLIARVMLLH. Residues 306 to 326 form a helical membrane-spanning segment; sequence LMTICPGTVLLVFSISLWIIA. Positions 346 to 366 form an intramembrane region, pore-forming; the sequence is FLGAMWLISITFLSIGYGDMV. Residues 375–395 form a helical membrane-spanning segment; sequence VCLLTGIMGAGCTALVVAVVA. The calmodulin-binding stretch occupies residues 413–489; the sequence is DTQLTKRVKN…LVDLAKTQNI (77 aa). The segment covering 551–560 has biased composition (basic and acidic residues); that stretch reads HVTYNAERSR. A disordered region spans residues 551 to 580; it reads HVTYNAERSRSSSRRRRSSSTAPPTSSESS. The segment covering 569-580 has biased composition (low complexity); it reads SSTAPPTSSESS.

The protein belongs to the potassium channel KCNN family. KCa2.2/KCNN2 subfamily. As to quaternary structure, homodimer. Heteromultimer with KCNN1 and KCNN3. The complex is composed of 4 channel subunits each of which binds to a calmodulin subunit which regulates the channel activity through calcium-binding. Interacts (via N-terminal domain) with MPP2. In terms of tissue distribution, brain.

The protein localises to the membrane. It localises to the cytoplasm. It is found in the myofibril. The protein resides in the sarcomere. Its subcellular location is the z line. It catalyses the reaction K(+)(in) = K(+)(out). Its activity is regulated as follows. Inhibited by bee venom neurotoxin apamin. Inhibited by UCL 1684 and tetraethylammonium (TEA). Its function is as follows. Small conductance calcium-activated potassium channel that mediates the voltage-independent transmembrane transfer of potassium across the cell membrane through a constitutive interaction with calmodulin which binds the intracellular calcium allowing its opening. The current is characterized by a voltage-independent activation, an intracellular calcium concentration increase-dependent activation and a single-channel conductance of about 3 picosiemens. Also presents an inwardly rectifying current, thus reducing its already small outward conductance of potassium ions, which is particularly the case when the membrane potential displays positive values, above + 20 mV. The inward rectification could be due to a blockade of the outward current by intracellular divalent cations such as calcium and magnesium and could also be due to an intrinsic property of the channel pore, independent of intracellular divalent ions. There are three positively charged amino acids in the S6 transmembrane domain, close to the pore, that collectively control the conductance and rectification through an electrostatic mechanism. Additionally, electrostatic contributions from these residues also play an important role in determining the intrinsic open probability of the channel in the absence of calcium, affecting the apparent calcium affinity for activation. Forms an heteromeric complex with calmodulin, which is constitutively associated in a calcium-independent manner. Channel opening is triggered when calcium binds the calmodulin resulting in a rotary movement leading to the formation of the dimeric complex to open the gate. Plays a role in the repolarization phase of cardiac action potential. This Rattus norvegicus (Rat) protein is Small conductance calcium-activated potassium channel protein 2.